A 333-amino-acid chain; its full sequence is Homeobox protein engrailed-1 (333 aa).

The span at 1 to 14 (MEEPPEGHGHHRDA) shows a compositional bias: basic and acidic residues. Disordered regions lie at residues 1-184 (MEEP…AAKY) and 226-247 (RPSS…DKRP). Residues 20-31 (ANGGGGGGGGSD) are compositionally biased toward gly residues. Over residues 38–66 (SPSPAPASPAAPCPLPLPRRRPPPPPPPR) the composition is skewed to pro residues. A compositionally biased stretch (gly residues) spans 94-104 (TGAGGGGGGGG). The span at 144-173 (DGSAPAGTAAKANPGTAAGAAGAAGAAKAQ) shows a compositional bias: low complexity. The homeobox DNA-binding region spans 244–303 (DKRPRTAFTAEQLQRLKAEFQANRYITEQRRQSLAQELSLNESRVKIWFQNKRAKIKKAT).

Belongs to the engrailed homeobox family.

It is found in the nucleus. Its function is as follows. Required for proper formation of the apical ectodermal ridge and correct dorsal-ventral patterning in the limb. The chain is Homeobox protein engrailed-1 (EN1) from Gallus gallus (Chicken).